Here is a 762-residue protein sequence, read N- to C-terminus: MTNRYHPYRGRELLNSAIDHVVGRWNDADDVNKELEKLRADVDTYKTKFRNLELTRNATDTINVNITHAVEPTETEQTPGVVPQPTTVLSTSIEDYDRSGNEYRRLIGSLKYDDIVKSIYALRERMVYDRDALLERARTQFANPGFLEITSSHIQDALGNTQYKDWKMDTTIKIFSIAKHRIYAHMNREVRLIQQEPEPIDARLKFITTIYPSFWFKELIERGLQEDYNDVLYVEQKNLSLIDGANRSELAKAQSWAPDIHYLISRMCSSLCMVPFIPLTGNNMNHAVYTDTQLLIHYAAFSNPSLVNYKEMLKDEFAYVRDHKSALFRAFETTCIKFKKYKDKLAYKRQGTVVAPTAVNINGTPVEGARGPTPVPPEIMDNLLPFLIDNIIRYRAEQREEAARGSRSIMIERDSPIGRFINFNNKSARELESLVKKLTRDYAMSEREVSLKGLSGQELPVLDFTRTLFTQMMTAAMTCNLMANRYTFFDRVINLVDETTPTPRKDVLYTPSLAAFPGALFYTLMYDQRHPLTPGTSNSSASPYNIAEYATDPVRRNLYSWMKNFFRLVPGIKASKMNTKVYGLAGKYKPNSMPSCEGPGNPSDIKEMMKGLRFINLDTMIQFSNNNKQACNMVLADYLTKIQKTELIEDLSDFYGYMFDLTPPSQGVKLIKNDQFVLPDFNAGNFARFSSAPIAYYIETIKIEERETQRENYRSSYRSDEGFTSLFAGLLEQQQRPRVAAAAPPPPPQPPAAAVPTTQAST.

A disordered region spans residues 734–762 (QQRPRVAAAAPPPPPQPPAAAVPTTQAST). Pro residues predominate over residues 743 to 753 (APPPPPQPPAA).

This is an uncharacterized protein from Ostreid herpesvirus 1 (isolate France) (OsHV-1).